Reading from the N-terminus, the 273-residue chain is Octanoyltransferase LipM (273 aa).

Residues 33-244 enclose the BPL/LPL catalytic domain; that stretch reads GKTPPTLRFY…AFTRLYAVEF (212 aa). Residue C146 is the Acyl-thioester intermediate of the active site.

The protein belongs to the octanoyltransferase LipM family. Monomer.

The enzyme catalyses octanoyl-[ACP] + L-lysyl-[protein] = N(6)-octanoyl-L-lysyl-[protein] + holo-[ACP] + H(+). It functions in the pathway protein modification; protein lipoylation via endogenous pathway; protein N(6)-(lipoyl)lysine from octanoyl-[acyl-carrier-protein]. Catalyzes the transfer of endogenously produced octanoic acid from octanoyl-acyl-carrier-protein onto the lipoyl domain of GcvH, an intermediate carrier during protein lipoylation. This is Octanoyltransferase LipM from Moorella thermoacetica (strain ATCC 39073 / JCM 9320).